Reading from the N-terminus, the 319-residue chain is Lipoyl synthase (319 aa).

The span at 1–12 (MVTIVDTLSNTP) shows a compositional bias: polar residues. A disordered region spans residues 1–32 (MVTIVDTLSNTPLRPRHPEKANRPDSISPAKP). Residues Cys-61, Cys-66, Cys-72, Cys-87, Cys-91, Cys-94, and Ser-300 each coordinate [4Fe-4S] cluster. The Radical SAM core domain maps to 73-289 (WDKKHATFMI…ETVAYTKGFL (217 aa)).

This sequence belongs to the radical SAM superfamily. Lipoyl synthase family. [4Fe-4S] cluster is required as a cofactor.

It localises to the cytoplasm. It carries out the reaction [[Fe-S] cluster scaffold protein carrying a second [4Fe-4S](2+) cluster] + N(6)-octanoyl-L-lysyl-[protein] + 2 oxidized [2Fe-2S]-[ferredoxin] + 2 S-adenosyl-L-methionine + 4 H(+) = [[Fe-S] cluster scaffold protein] + N(6)-[(R)-dihydrolipoyl]-L-lysyl-[protein] + 4 Fe(3+) + 2 hydrogen sulfide + 2 5'-deoxyadenosine + 2 L-methionine + 2 reduced [2Fe-2S]-[ferredoxin]. The protein operates within protein modification; protein lipoylation via endogenous pathway; protein N(6)-(lipoyl)lysine from octanoyl-[acyl-carrier-protein]: step 2/2. Its function is as follows. Catalyzes the radical-mediated insertion of two sulfur atoms into the C-6 and C-8 positions of the octanoyl moiety bound to the lipoyl domains of lipoate-dependent enzymes, thereby converting the octanoylated domains into lipoylated derivatives. The protein is Lipoyl synthase of Bradyrhizobium sp. (strain BTAi1 / ATCC BAA-1182).